The primary structure comprises 245 residues: DNA repair protein RecO (245 aa).

Belongs to the RecO family.

In terms of biological role, involved in DNA repair and RecF pathway recombination. The polypeptide is DNA repair protein RecO (Klebsiella pneumoniae (strain 342)).